A 236-amino-acid polypeptide reads, in one-letter code: Pyridoxine 5'-phosphate synthase (236 aa).

Residue Asn-6 coordinates 3-amino-2-oxopropyl phosphate. Residue 8–9 (DH) participates in 1-deoxy-D-xylulose 5-phosphate binding. Arg-17 is a 3-amino-2-oxopropyl phosphate binding site. His-42 functions as the Proton acceptor in the catalytic mechanism. Residues Arg-44 and His-49 each coordinate 1-deoxy-D-xylulose 5-phosphate. Catalysis depends on Glu-69, which acts as the Proton acceptor. 1-deoxy-D-xylulose 5-phosphate is bound at residue Thr-99. The active-site Proton donor is His-190. Residues Gly-191 and 212–213 (GH) contribute to the 3-amino-2-oxopropyl phosphate site.

It belongs to the PNP synthase family. Homooctamer; tetramer of dimers.

It is found in the cytoplasm. It catalyses the reaction 3-amino-2-oxopropyl phosphate + 1-deoxy-D-xylulose 5-phosphate = pyridoxine 5'-phosphate + phosphate + 2 H2O + H(+). It functions in the pathway cofactor biosynthesis; pyridoxine 5'-phosphate biosynthesis; pyridoxine 5'-phosphate from D-erythrose 4-phosphate: step 5/5. Catalyzes the complicated ring closure reaction between the two acyclic compounds 1-deoxy-D-xylulose-5-phosphate (DXP) and 3-amino-2-oxopropyl phosphate (1-amino-acetone-3-phosphate or AAP) to form pyridoxine 5'-phosphate (PNP) and inorganic phosphate. The polypeptide is Pyridoxine 5'-phosphate synthase (Chlorobium phaeobacteroides (strain DSM 266 / SMG 266 / 2430)).